Consider the following 406-residue polypeptide: Argininosuccinate synthase (406 aa).

ATP is bound by residues Ala-11 to Ser-19 and Ala-38. Residues Tyr-91 and Ser-96 each contribute to the L-citrulline site. Gly-121 is a binding site for ATP. Residues Thr-123, Asn-127, and Asp-128 each contribute to the L-aspartate site. Residue Asn-127 coordinates L-citrulline. L-citrulline-binding residues include Arg-131, Ser-181, Ser-190, Glu-266, and Tyr-278.

The protein belongs to the argininosuccinate synthase family. Type 1 subfamily. As to quaternary structure, homotetramer.

The protein resides in the cytoplasm. The catalysed reaction is L-citrulline + L-aspartate + ATP = 2-(N(omega)-L-arginino)succinate + AMP + diphosphate + H(+). It participates in amino-acid biosynthesis; L-arginine biosynthesis; L-arginine from L-ornithine and carbamoyl phosphate: step 2/3. The polypeptide is Argininosuccinate synthase (Campylobacter jejuni subsp. jejuni serotype O:2 (strain ATCC 700819 / NCTC 11168)).